A 434-amino-acid polypeptide reads, in one-letter code: Serine/threonine-protein kinase Sgk1-B (434 aa).

A disordered region spans residues 68–94; that stretch reads ESELLNENSSPPPSHSQQINLGPSSNP. The Protein kinase domain maps to 101-358; the sequence is FQFLKIIGKG…FMEIKNHIFF (258 aa). ATP contacts are provided by residues 107-115 and Lys-130; that span reads IGKGSFGKV. Residue Asp-225 is the Proton acceptor of the active site. The AGC-kinase C-terminal domain maps to 359-434; it reads SPIDWDDLIN…SYAPPMDSYL (76 aa).

Belongs to the protein kinase superfamily. AGC Ser/Thr protein kinase family.

The protein resides in the cytoplasm. The protein localises to the nucleus. It localises to the endoplasmic reticulum. It carries out the reaction L-seryl-[protein] + ATP = O-phospho-L-seryl-[protein] + ADP + H(+). It catalyses the reaction L-threonyl-[protein] + ATP = O-phospho-L-threonyl-[protein] + ADP + H(+). In terms of biological role, protein kinase that may play an important role in cellular stress response. Plays an important role in activating certain potassium, sodium, and chloride channels, suggesting an involvement in the regulation of processes such as cell survival, neuronal excitability and renal sodium excretion. This chain is Serine/threonine-protein kinase Sgk1-B (sgk1-b), found in Xenopus laevis (African clawed frog).